A 237-amino-acid chain; its full sequence is Uridylate kinase (237 aa).

12–15 is an ATP binding site; that stretch reads KLSG. The interval 20–25 is involved in allosteric activation by GTP; it reads GAEGFG. G54 contributes to the UMP binding site. Residues G55 and R59 each contribute to the ATP site. Residues D74 and 135-142 each bind UMP; that span reads TGSPFFTT. ATP contacts are provided by T162, Y168, and D171.

The protein belongs to the UMP kinase family. In terms of assembly, homohexamer.

The protein resides in the cytoplasm. It carries out the reaction UMP + ATP = UDP + ADP. The protein operates within pyrimidine metabolism; CTP biosynthesis via de novo pathway; UDP from UMP (UMPK route): step 1/1. With respect to regulation, allosterically activated by GTP. Inhibited by UTP. In terms of biological role, catalyzes the reversible phosphorylation of UMP to UDP. The chain is Uridylate kinase from Actinobacillus succinogenes (strain ATCC 55618 / DSM 22257 / CCUG 43843 / 130Z).